The primary structure comprises 352 residues: Protein Wnt-3a (352 aa).

A signal peptide spans 1–18; it reads MAPLGYFLLLCSLKQALG. Disulfide bonds link Cys77/Cys88, Cys128/Cys136, Cys138/Cys155, Cys203/Cys217, Cys205/Cys212, Cys281/Cys312, Cys297/Cys307, Cys311/Cys351, Cys327/Cys342, Cys329/Cys339, and Cys334/Cys335. N-linked (GlcNAc...) asparagine glycosylation occurs at Asn87. The O-palmitoleoyl serine; by PORCN moiety is linked to residue Ser209. Asn298 carries N-linked (GlcNAc...) asparagine glycosylation.

It belongs to the Wnt family. In terms of assembly, forms a soluble 1:1 complex with AFM; this prevents oligomerization and is required for prolonged biological activity. The complex with AFM may represent the physiological form in body fluids. Homooligomer; disulfide-linked, leading to inactivation. Interacts with PORCN. Interacts with APCDD1 and WLS. Component of the Wnt-Fzd-LRP5-LRP6 signaling complex that contains a WNT protein, a FZD protein and LRP5 or LRP6. Interacts directly in the complex with LRP6. Interacts with glypican GPC3. Interacts with PKD1 (via extracellular domain). Interacts with FZD5. Palmitoleoylation by PORCN is required for efficient binding to frizzled receptors. Palmitoleoylation is required for proper trafficking to cell surface, vacuolar acidification is critical to release palmitoleoylated WNT3A from WLS in secretory vesicles. Depalmitoleoylated by NOTUM, leading to inhibit Wnt signaling pathway, possibly by promoting disulfide bond formation and oligomerization. Post-translationally, proteolytic processing by TIKI1 and TIKI2 promotes oxidation and formation of large disulfide-bond oligomers, leading to inactivation of WNT3A. In terms of processing, disulfide bonds have critical and distinct roles in secretion and activity. Loss of each conserved cysteine in WNT3A results in high molecular weight oxidized Wnt oligomers, which are formed through inter-Wnt disulfide bonding. Moderately expressed in placenta and at low levels in adult lung, spleen, and prostate.

The protein localises to the secreted. It is found in the extracellular space. It localises to the extracellular matrix. Ligand for members of the frizzled family of seven transmembrane receptors. Functions in the canonical Wnt signaling pathway that results in activation of transcription factors of the TCF/LEF family. Required for normal embryonic mesoderm development and formation of caudal somites. Required for normal morphogenesis of the developing neural tube. Mediates self-renewal of the stem cells at the bottom on intestinal crypts (in vitro). The protein is Protein Wnt-3a (WNT3A) of Homo sapiens (Human).